A 133-amino-acid polypeptide reads, in one-letter code: Small ribosomal subunit protein uS8 (133 aa).

This sequence belongs to the universal ribosomal protein uS8 family. In terms of assembly, part of the 30S ribosomal subunit. Contacts proteins S5 and S12.

In terms of biological role, one of the primary rRNA binding proteins, it binds directly to 16S rRNA central domain where it helps coordinate assembly of the platform of the 30S subunit. The protein is Small ribosomal subunit protein uS8 of Anaplasma phagocytophilum (strain HZ).